The primary structure comprises 332 residues: MKIVVDGMGGDYSPHIVVKGCIEAIKEYNNIDIIITGPEKLINDELQKYEYNKEKITVLDAKDVITNNEHPVMAIRRKKESSIYKALQMMKNKEADAVISAGSTGAFLAGATLVVGRIKGVSRPALAPIMPGKNGPFMIIDCGANAECKPSNLVQFAKMGEIYFENILNVKNPTVGLINIGSEEEKGNELTKEAHKLLKDMDFNFVGNVEPRDIPTGNTNVLVCDGFVGNTVLKMYEGVASTIFETLKDEIMSSFRTKIGGLLLKPVFKKFKKDYDYKEYGGAAFLGVDGICIKAHGSSDDKAFKNAIKQAINFYENGIIDKIKSHIEQKMI.

This sequence belongs to the PlsX family. Homodimer. Probably interacts with PlsY.

The protein localises to the cytoplasm. The enzyme catalyses a fatty acyl-[ACP] + phosphate = an acyl phosphate + holo-[ACP]. It functions in the pathway lipid metabolism; phospholipid metabolism. Its function is as follows. Catalyzes the reversible formation of acyl-phosphate (acyl-PO(4)) from acyl-[acyl-carrier-protein] (acyl-ACP). This enzyme utilizes acyl-ACP as fatty acyl donor, but not acyl-CoA. The polypeptide is Phosphate acyltransferase (Clostridium novyi (strain NT)).